The following is a 485-amino-acid chain: Heat stress transcription factor A-1d (485 aa).

Disordered regions lie at residues 1–34 and 126–149; these read MDVSKVTTSDGGGDSMETKPSPQPQPAAILSSNA and RRKPAHGQGQGHQRSQHSNGQNSS. The DNA-binding element occupies 35–129; that stretch reads PPPFLSKTYD…LLQSITRRKP (95 aa). Over residues 136–146 the composition is skewed to low complexity; sequence GHQRSQHSNGQ. Positions 152-218 are hydrophobic repeat HR-A/B; sequence ACVEVGKFGL…QLMSFLAKAV (67 aa). Disordered stretches follow at residues 229 to 269 and 436 to 461; these read QQQN…GQIV and PVPDNMDSTPVDNETEQEQNGWDKTK. The Bipartite nuclear localization signal signature appears at 238 to 252; that stretch reads NRRISDTSKKRRFKR. Polar residues predominate over residues 441-455; it reads MDSTPVDNETEQEQN. A Nuclear export signal motif is present at residues 472–480; sequence LLSPETLDL.

Belongs to the HSF family. Class A subfamily. In terms of assembly, homotrimer. Interacts with HSP90-2. Exhibits temperature-dependent phosphorylation.

It is found in the cytoplasm. The protein resides in the nucleus. Its function is as follows. Transcriptional regulator that specifically binds DNA sequence 5'-AGAAnnTTCT-3' known as heat shock promoter elements (HSE). In Arabidopsis thaliana (Mouse-ear cress), this protein is Heat stress transcription factor A-1d (HSFA1D).